The sequence spans 408 residues: Phosphoglycerate kinase (408 aa).

Residues 24 to 26, R40, 63 to 66, R122, and R166 contribute to the substrate site; these read DLN and HLGR. Residues K216, G304, E335, and 364–367 each bind ATP; that span reads GGDS.

The protein belongs to the phosphoglycerate kinase family. Monomer.

The protein localises to the cytoplasm. It carries out the reaction (2R)-3-phosphoglycerate + ATP = (2R)-3-phospho-glyceroyl phosphate + ADP. It participates in carbohydrate degradation; glycolysis; pyruvate from D-glyceraldehyde 3-phosphate: step 2/5. The chain is Phosphoglycerate kinase from Mycolicibacterium smegmatis (strain ATCC 700084 / mc(2)155) (Mycobacterium smegmatis).